The chain runs to 98 residues: Alpha-elicitin capsicein (98 aa).

3 disulfide bridges follow: Cys-3–Cys-71, Cys-27–Cys-56, and Cys-51–Cys-95.

The protein belongs to the elicitin family.

The protein resides in the secreted. In terms of biological role, induces local and distal defense responses (incompatible hypersensitive reaction) in plants from the solanaceae and cruciferae families. Elicits leaf necrosis and causes the accumulation of pathogenesis-related proteins. Might interact with the lipidic molecules of the plasma membrane. The protein is Alpha-elicitin capsicein of Phytophthora capsici.